The primary structure comprises 444 residues: Chromosome partition protein MukF (444 aa).

Positions 211-239 (LDETSGNLRELQDTLNAAGDKLQAQLLRI) are leucine-zipper.

This sequence belongs to the MukF family. Interacts, and probably forms a ternary complex, with MukE and MukB via its C-terminal region. The complex formation is stimulated by calcium or magnesium. It is required for an interaction between MukE and MukB.

The protein resides in the cytoplasm. The protein localises to the nucleoid. Involved in chromosome condensation, segregation and cell cycle progression. May participate in facilitating chromosome segregation by condensation DNA from both sides of a centrally located replisome during cell division. Not required for mini-F plasmid partitioning. Probably acts via its interaction with MukB and MukE. Overexpression results in anucleate cells. It has a calcium binding activity. The sequence is that of Chromosome partition protein MukF from Actinobacillus succinogenes (strain ATCC 55618 / DSM 22257 / CCUG 43843 / 130Z).